The primary structure comprises 883 residues: Collagen, type I, alpha 1b (883 aa).

The segment at Gln-1–Arg-883 is disordered. Residues Pro-13–Ser-33 show a composition bias toward pro residues. Low complexity-rich tracts occupy residues Ser-34 to Ser-57, Val-113 to Arg-122, and Ser-129 to Pro-140. Composition is skewed to gly residues over residues Thr-147–Gly-161 and Gly-185–Gly-194. Composition is skewed to low complexity over residues Ser-195–Pro-205, Ala-214–Pro-223, and Pro-230–Ala-248. A compositionally biased stretch (gly residues) spans Gly-285–Gly-297. 2 stretches are compositionally biased toward low complexity: residues Ala-310–Lys-326 and Val-390–Ala-402. Over residues Gly-415–Gly-424 the composition is skewed to gly residues. The span at Ala-425–Ala-444 shows a compositional bias: low complexity. 2 stretches are compositionally biased toward gly residues: residues Gly-445–Gly-454 and Gly-478–Gly-487. Over residues Ala-512–Lys-542 the composition is skewed to low complexity. Positions Gly-564–Gly-573 are enriched in gly residues. Low complexity-rich tracts occupy residues Ala-574–Val-584, Ala-717–Lys-726, and Ser-742–Ala-756. Positions Lys-757–His-771 are enriched in basic and acidic residues. The span at Pro-792–Gly-812 shows a compositional bias: low complexity. Pro residues predominate over residues Ala-821–Pro-836.

It belongs to the fibrillar collagen family.

The polypeptide is Collagen, type I, alpha 1b (Epinephelus costae (Goldblotch grouper)).